A 173-amino-acid polypeptide reads, in one-letter code: ATP synthase subunit b (173 aa).

A helical transmembrane segment spans residues 15 to 35 (GVEWGTVIVQVLTFIVLLALL).

Belongs to the ATPase B chain family. As to quaternary structure, F-type ATPases have 2 components, F(1) - the catalytic core - and F(0) - the membrane proton channel. F(1) has five subunits: alpha(3), beta(3), gamma(1), delta(1), epsilon(1). F(0) has three main subunits: a(1), b(2) and c(10-14). The alpha and beta chains form an alternating ring which encloses part of the gamma chain. F(1) is attached to F(0) by a central stalk formed by the gamma and epsilon chains, while a peripheral stalk is formed by the delta and b chains.

It is found in the cell membrane. Functionally, f(1)F(0) ATP synthase produces ATP from ADP in the presence of a proton or sodium gradient. F-type ATPases consist of two structural domains, F(1) containing the extramembraneous catalytic core and F(0) containing the membrane proton channel, linked together by a central stalk and a peripheral stalk. During catalysis, ATP synthesis in the catalytic domain of F(1) is coupled via a rotary mechanism of the central stalk subunits to proton translocation. Its function is as follows. Component of the F(0) channel, it forms part of the peripheral stalk, linking F(1) to F(0). This chain is ATP synthase subunit b, found in Staphylococcus aureus (strain MSSA476).